Reading from the N-terminus, the 1914-residue chain is Autophagy-related protein 2 homolog A (1914 aa).

The Chorein N-terminal domain maps to 14 to 112; that stretch reads ERVCRYLLQH…LTLQPRQGSG (99 aa). Phosphoserine occurs at positions 764, 869, 875, and 877. Residues 1222–1243 are disordered; sequence DLHPPPRPPSPTEIAGQKLSES. A phosphoserine mark is found at serine 1246, serine 1282, and serine 1290. Residues 1299–1337 form a disordered region; that stretch reads GERSGAQAPLPPPGASSHTLGSKAKEHENEEEGDGDTLD. Over residues 1327-1337 the composition is skewed to acidic residues; the sequence is NEEEGDGDTLD. The segment at 1337 to 1383 is WIPI-interacting; it reads DSDEFCILDAPGLGIAPRDGEPIVTQLHPGPIIVHDGHFSQPLGSTD. A Phosphoserine modification is found at serine 1381. 3 disordered regions span residues 1427 to 1452, 1589 to 1634, and 1803 to 1822; these read LTGP…TQGG, MVPG…SSSD, and RSLQ…QPAD. Over residues 1429–1446 the composition is skewed to low complexity; sequence GPRVSPSRSSGPNRPQNS.

It belongs to the ATG2 family. As to quaternary structure, interacts with ATG9A (via C-terminus). Interacts with TMEM41B. Interacts with VMP1.

It localises to the preautophagosomal structure membrane. Its subcellular location is the lipid droplet. The protein localises to the endoplasmic reticulum membrane. It carries out the reaction a 1,2-diacyl-sn-glycero-3-phospho-L-serine(in) = a 1,2-diacyl-sn-glycero-3-phospho-L-serine(out). The enzyme catalyses a 1,2-diacyl-sn-glycero-3-phosphoethanolamine(in) = a 1,2-diacyl-sn-glycero-3-phosphoethanolamine(out). Functionally, lipid transfer protein involved in autophagosome assembly. Tethers the edge of the isolation membrane (IM) to the endoplasmic reticulum (ER) and mediates direct lipid transfer from ER to IM for IM expansion. Binds to the ER exit site (ERES), which is the membrane source for autophagosome formation, and extracts phospholipids from the membrane source and transfers them to ATG9 (ATG9A or ATG9B) to the IM for membrane expansion. Lipid transfer activity is enhanced by WIPI1 and WDR45/WIPI4, which promote ATG2A-association with phosphatidylinositol 3-monophosphate (PI3P)-containing membranes. Also regulates lipid droplets morphology and distribution within the cell. (Microbial infection) Mediates the intracellular lifestyle of Cryptococcus neoformans by supporting infection. In Mus musculus (Mouse), this protein is Autophagy-related protein 2 homolog A.